The sequence spans 98 residues: Small ribosomal subunit protein bS6 (98 aa).

The protein belongs to the bacterial ribosomal protein bS6 family.

In terms of biological role, binds together with bS18 to 16S ribosomal RNA. The sequence is that of Small ribosomal subunit protein bS6 from Staphylococcus epidermidis (strain ATCC 35984 / DSM 28319 / BCRC 17069 / CCUG 31568 / BM 3577 / RP62A).